The primary structure comprises 806 residues: Phenylalanine--tRNA ligase beta subunit (806 aa).

The region spanning 44 to 158 is the tRNA-binding domain; sequence ADGLSKLVVG…EEAVPGDAIF (115 aa). One can recognise a B5 domain in the interval 411–486; the sequence is TEPVEVSTSL…RIYGYDKLPT (76 aa). Mg(2+)-binding residues include D464, D470, E473, and E474. One can recognise an FDX-ACB domain in the interval 713–806; it reads TKFPAMTRDV…LTEQVGAEVR (94 aa).

Belongs to the phenylalanyl-tRNA synthetase beta subunit family. Type 1 subfamily. As to quaternary structure, tetramer of two alpha and two beta subunits. Mg(2+) is required as a cofactor.

Its subcellular location is the cytoplasm. It carries out the reaction tRNA(Phe) + L-phenylalanine + ATP = L-phenylalanyl-tRNA(Phe) + AMP + diphosphate + H(+). This chain is Phenylalanine--tRNA ligase beta subunit, found in Streptococcus pyogenes serotype M28 (strain MGAS6180).